The following is an 877-amino-acid chain: MTSAEIRQQFLDFFASKGHQIVPSAPIVNKNDPTLMFTNAGMNQFKDYFLGNETPKYRRIADTQKCLRVSGKHNDLEEVGIDTYHHTMFEMLGNWSFGDYFKEEAIAWSWELLTSVYKLPKDRLYVTIFEGDDKEKLARDTEAYNFWKKWIAEDRILLGNKKDNFWEMGEQGPCGPCSEIHVDLRTDEEVKAVDGKTLVNNDHPQVVEIWNNVFIQFNRKADGSLEELPDKHVDTGMGFERLCMAIQKKKSNYDTDVFTPMIDFVAKAAGIKYGADEKTDIAMRVMADHIRAISFVIADGQLPSNNKAGYVIRRILRRAVRYAYTFLNLKEPFLYKLVAVLADQLAHVFPELKSQQDFVAKVVQEEEISFLRTLDIGLSKLEQIREELKAKKATTIDGKTAFELYDTFGFPLDLIQLIARENGLTVDEAGFDTEMAAQKQRSKKAASVETSDWTIVTEDDEVEFVGYDHLISTSRIIKYRQVKTKGKDQYQLVLDTTPFYAESGGQAGDTGTLVQGDKKIKVLNTVKENNLIIHITEQLPADLKAPVDCKVNVLQRSLTENNHSATHLLHAALKQVLGSHVNQKGSLVNESVLRFDFSHFSKVTEEELKKVELIVNEKIRENISLNERRNVPIEEAKKLGAMALFGEKYGEYVRMITFDDSFSRELCGGTHVSSTGKIGFFKITSESSVAAGVRRIEALTATAAEVFVDEQQTTLAKITELMKNPKDLVKSLEDLLEERIVLQKQLDEYQAEKSKAIAKSLKDTVEKVGDINVIRAKLVLPSVDAMRQVAYDLKQTVDNLLLVLAVNVDGKPNIAVMISDNLVADKGLNASQMIRELSKEIQGGGGGQPFYATAGGKELNGLDKVIAKSKDLIQVHA.

4 residues coordinate Zn(2+): histidine 563, histidine 567, cysteine 667, and histidine 671.

This sequence belongs to the class-II aminoacyl-tRNA synthetase family. Requires Zn(2+) as cofactor.

The protein localises to the cytoplasm. It catalyses the reaction tRNA(Ala) + L-alanine + ATP = L-alanyl-tRNA(Ala) + AMP + diphosphate. Catalyzes the attachment of alanine to tRNA(Ala) in a two-step reaction: alanine is first activated by ATP to form Ala-AMP and then transferred to the acceptor end of tRNA(Ala). Also edits incorrectly charged Ser-tRNA(Ala) and Gly-tRNA(Ala) via its editing domain. The chain is Alanine--tRNA ligase from Cytophaga hutchinsonii (strain ATCC 33406 / DSM 1761 / CIP 103989 / NBRC 15051 / NCIMB 9469 / D465).